The chain runs to 248 residues: Triosephosphate isomerase (248 aa).

Substrate is bound at residue Lys-12. The Electrophile role is filled by His-94. Glu-165 functions as the Proton acceptor in the catalytic mechanism.

The protein belongs to the triosephosphate isomerase family. Homodimer.

The enzyme catalyses D-glyceraldehyde 3-phosphate = dihydroxyacetone phosphate. It participates in carbohydrate biosynthesis; gluconeogenesis. The protein operates within carbohydrate degradation; glycolysis; D-glyceraldehyde 3-phosphate from glycerone phosphate: step 1/1. The sequence is that of Triosephosphate isomerase (Tpi) from Bombyx mori (Silk moth).